The chain runs to 218 residues: Small ribosomal subunit protein uS3 (218 aa).

Residues 38–106 (LRNDLKKKLM…PVHLNIEEVK (69 aa)) form the KH type-2 domain.

The protein belongs to the universal ribosomal protein uS3 family. As to quaternary structure, part of the 30S ribosomal subunit. Forms a tight complex with proteins S10 and S14.

Functionally, binds the lower part of the 30S subunit head. Binds mRNA in the 70S ribosome, positioning it for translation. The polypeptide is Small ribosomal subunit protein uS3 (Legionella pneumophila (strain Paris)).